Reading from the N-terminus, the 337-residue chain is MKKMPLFSKSHKNPAEIVKILKDNLAILEKQDKKTDKASEEVSKSLQAMKEILCGTNDKEPPTEAVAQLAQELYSSGLLVTLIADLQLIDFEGKKDVTQIFNNILRRQIGTRCPTVEYISSHPHILFMLLKGYEAPQIALRCGIMLRECIRHEPLAKIILFSNQFRDFFKYVELSTFDIASDAFATFKDLLTRHKVLVADFLEQNYDTIFEDYEKLLQSENYVTKRQSLKLLGELILDRHNFTIMTKYISKPENLKLMMNLLRDKSPNIQFEAFHVFKVFVASPHKTQPIVEILLKNQPKLIEFLSSFQKERTDDEQFADEKNYLIKQIRDLKKAAP.

It belongs to the Mo25 family. As to quaternary structure, component of a trimeric complex composed of STK11/LKB1, STRAD (STRADA or STRADB) and CAB39/MO25 (CAB39/MO25alpha or CAB39L/MO25beta): the complex tethers STK11/LKB1 in the cytoplasm and stimulates its catalytic activity.

In terms of biological role, component of a complex that binds and activates STK11/LKB1. In the complex, required to stabilize the interaction between CAB39/MO25 (CAB39/MO25alpha or CAB39L/MO25beta) and STK11/LKB1. The polypeptide is Calcium-binding protein 39-like (Cab39l) (Mus musculus (Mouse)).